The sequence spans 392 residues: DNA replication and repair protein RecF (392 aa).

30 to 37 (GPNAAGKT) serves as a coordination point for ATP.

The protein belongs to the RecF family.

It is found in the cytoplasm. Its function is as follows. The RecF protein is involved in DNA metabolism; it is required for DNA replication and normal SOS inducibility. RecF binds preferentially to single-stranded, linear DNA. It also seems to bind ATP. The chain is DNA replication and repair protein RecF from Chloroflexus aggregans (strain MD-66 / DSM 9485).